The primary structure comprises 304 residues: MSASTAAPARDRLRIAIQKNGRLAEPARSLLAACGLSWRQSRDKLFCYGESLPVDLLLVRDDDIPGLIADGVCDLGIVGQNELDEQASARRRAGLPAAYHAVRGVGFGQCRLMLAVPEEWEWQGVAQLAGKRIATSYPAILADWLERQGIDASVVELSGSVEIAPRLGTADLICDLVSSGATLAANQLKPVELVMESEAVLAGAVREPADARAALLAMLLRRMDGVLKLRDSKLLMFRAEQGNVDALRRLLPDADPLVQLPDDGNGALRLQTMCHGAVTWQRLEELERAGAQGLMVLTVERSLA.

Belongs to the ATP phosphoribosyltransferase family. Long subfamily. Mg(2+) is required as a cofactor.

The protein localises to the cytoplasm. The enzyme catalyses 1-(5-phospho-beta-D-ribosyl)-ATP + diphosphate = 5-phospho-alpha-D-ribose 1-diphosphate + ATP. Its pathway is amino-acid biosynthesis; L-histidine biosynthesis; L-histidine from 5-phospho-alpha-D-ribose 1-diphosphate: step 1/9. With respect to regulation, feedback inhibited by histidine. Catalyzes the condensation of ATP and 5-phosphoribose 1-diphosphate to form N'-(5'-phosphoribosyl)-ATP (PR-ATP). Has a crucial role in the pathway because the rate of histidine biosynthesis seems to be controlled primarily by regulation of HisG enzymatic activity. The polypeptide is ATP phosphoribosyltransferase (Xanthomonas campestris pv. campestris (strain B100)).